We begin with the raw amino-acid sequence, 497 residues long: MEMTLMVSLCLTTLLTLLLLKKFLKRTAKKVNLPPSPWRIPVIGNLHQLSLHPHRSLHSLSLRYGPLMLLHFGRVPILVVSSSEAAHEILKTHDLKFANRPKSKAVHGLMNGGRDVVFGPYGEYWRQMKSVCILNLLTNKMVASFEKVREEEVNAMMEKLEKASCSSSAENLSELFVTLTSDVTSRVSLGKKYWEDETAGGLKKRVRQIMELLREFPIGDYVPALAWIDRINGFNSKIVEVSRAYSDLMEKVVQEHLEAGEHKADFVNILLSIEKEKNNGFKVQRNDIKFMILDMFIGGISTSSTLLEWIMTELIRNPECMKKLQNEIRSTIRPHGSYIKEKEVENMRYLKAVIKEVFRVHPPLPLILPRLLTEDVKVKGYDIAAGTEVLINAWSIHRDPAIWGPDAEEFKPERHLDSTLDYHGQDLKYIPFGSGRRICPGINLAMGLVEVTLANLVGRFDWSVDPGPNGDQPDLAEDFGLDVCRKNPLIAFPSSVA.

A helical transmembrane segment spans residues 4–24; it reads TLMVSLCLTTLLTLLLLKKFL. Cys439 contributes to the heme binding site.

The protein belongs to the cytochrome P450 family. Heme serves as cofactor.

The protein resides in the membrane. The polypeptide is Cytochrome P450 71A18 (CYP71A18) (Arabidopsis thaliana (Mouse-ear cress)).